The primary structure comprises 23 residues: Phospholipase A2 crotoxin basic chain 3 (23 aa).

It depends on Ca(2+) as a cofactor. Post-translationally, contains 7 disulfide bonds. In terms of tissue distribution, expressed by the venom gland.

The protein resides in the secreted. It catalyses the reaction a 1,2-diacyl-sn-glycero-3-phosphocholine + H2O = a 1-acyl-sn-glycero-3-phosphocholine + a fatty acid + H(+). Functionally, snake venom phospholipase A2 (PLA2) that shows presynaptic neurotoxicity. PLA2 catalyzes the calcium-dependent hydrolysis of the 2-acyl groups in 3-sn-phosphoglycerides. This chain is Phospholipase A2 crotoxin basic chain 3, found in Crotalus durissus terrificus (South American rattlesnake).